Consider the following 869-residue polypeptide: DNA mismatch repair protein MutS (869 aa).

ATP is bound at residue Gly-602–Ser-609.

Belongs to the DNA mismatch repair MutS family.

Functionally, this protein is involved in the repair of mismatches in DNA. It is possible that it carries out the mismatch recognition step. This protein has a weak ATPase activity. The polypeptide is DNA mismatch repair protein MutS (Bacillus licheniformis (strain ATCC 14580 / DSM 13 / JCM 2505 / CCUG 7422 / NBRC 12200 / NCIMB 9375 / NCTC 10341 / NRRL NRS-1264 / Gibson 46)).